The following is a 641-amino-acid chain: Threonine--tRNA ligase (641 aa).

In terms of domain architecture, TGS spans 1–61 (MPAITLPDGS…ADDASVRFIT (61 aa)). The interval 243-536 (DHRRIGREMD…LIEQHAGRFP (294 aa)) is catalytic. Zn(2+) contacts are provided by C336, H387, and H513.

The protein belongs to the class-II aminoacyl-tRNA synthetase family. In terms of assembly, homodimer. It depends on Zn(2+) as a cofactor.

It localises to the cytoplasm. The catalysed reaction is tRNA(Thr) + L-threonine + ATP = L-threonyl-tRNA(Thr) + AMP + diphosphate + H(+). Catalyzes the attachment of threonine to tRNA(Thr) in a two-step reaction: L-threonine is first activated by ATP to form Thr-AMP and then transferred to the acceptor end of tRNA(Thr). Also edits incorrectly charged L-seryl-tRNA(Thr). This Gluconacetobacter diazotrophicus (strain ATCC 49037 / DSM 5601 / CCUG 37298 / CIP 103539 / LMG 7603 / PAl5) protein is Threonine--tRNA ligase.